A 623-amino-acid chain; its full sequence is Pyranose 2-oxidase (623 aa).

A signal peptide spans 1-28 (MSTSSSDPFFNFAKSSFRSAAAQKASAS). The propeptide occupies 29–38 (SLPPLPGPDK). His167 carries the post-translational modification Tele-8alpha-FAD histidine. The substrate site is built by Gln448 and His450. The active-site Proton acceptor is the His548. The active site involves Asn593.

The protein belongs to the GMC oxidoreductase family. In terms of assembly, homotetramer. It depends on FAD as a cofactor.

The protein resides in the periplasm. The enzyme catalyses D-glucose + O2 = 2-dehydro-D-glucose + H2O2. In terms of biological role, catalyzes the oxidation of various aldopyranoses and disaccharides on carbon-2 to the corresponding 2-keto sugars concomitant with the reduction of O(2) to H(2)O(2). Plays an important role in lignin degradation of wood rot fungi by supplying the essential cosubstrate H(2)O(2) for the ligninolytic peroxidases, lignin peroxidase and manganese-dependent peroxidase. This Peniophora sp. (strain SG) (White-rot fungus) protein is Pyranose 2-oxidase (p2ox).